A 450-amino-acid polypeptide reads, in one-letter code: Gluconate permease (450 aa).

12 helical membrane passes run 6–26 (HDAY…VLIT), 30–50 (VHPF…SGMP), 60–80 (DGFG…TMLG), 116–136 (VGIP…VFIV), 142–162 (VSLI…HGLV), 183–203 (ILYG…LFGA), 233–253 (FGVT…KTFA), 269–289 (MIGH…YTFG), 312–332 (AIVM…ASGV), 338–358 (HLAV…AAVI), 366–386 (TVAT…IPGV), and 430–450 (AMET…SLVL).

Belongs to the GntP permease family.

Its subcellular location is the cell inner membrane. It participates in carbohydrate acid metabolism; D-gluconate degradation. The chain is Gluconate permease (gnuT) from Pseudomonas aeruginosa (strain ATCC 15692 / DSM 22644 / CIP 104116 / JCM 14847 / LMG 12228 / 1C / PRS 101 / PAO1).